The following is a 560-amino-acid chain: MRPEPGGCCCRRPMRANGCVKNGEVRNGYLRSSTATVAAAGQIHHVTENGGLYKRPFNEAFEETPMLVAVLTYVGYGVLTLFGYLRDFLRHWRIEKCHHATEREEQKDFVSLYQDFENFYTRNLYMRIRDNWNRPICSVPGAKVDIMERKSHDYNWSFKYTGNIIKGVINMGSYNYLGFARNTGSCQEAAAEVLKEYGAGVCSTRQEIGNLDKHEELEKLVARFLGVEAAMTYGMGFATNSMNIPALVGKGCLILSDELNHASLVLGARLSGATIRIFKHNNMQSLEKLLKDAIVYGQPRTRRPWKKILILVEGIYSMEGSIVRLPEVIALKKKYKAYLYLDEAHSIGALGPSGRGVVDYFGLDPEDVDVMMGTFTKSFGASGGYIGGKKELIDYLRTHSHSAVYATSMSPPVMEQIITSMKCIMGQDGTSLGKECIQQLAENTRYFRRRLKEMGFIIYGNEDSPVVPLMLYMPAKIGAFGREMLKRNIGVVVVGFPATPIIESRARFCLSAAHTKEILDTALKEIDEVGDLLQLKYSRHRLVPLLDRPFDETTYEETED.

Residues 65–85 (PMLVAVLTYVGYGVLTLFGYL) traverse the membrane as a helical segment. At Lys377 the chain carries N6-(pyridoxal phosphate)lysine.

This sequence belongs to the class-II pyridoxal-phosphate-dependent aminotransferase family. As to quaternary structure, component of the serine palmitoyltransferase (SPT) complex, which is composed of SPTLC1, SPTLC2 or SPTLC3 and SPTSSA or SPTSSB. The heterodimer consisting of SPTLC1 and SPTLC2/SPTLC3 forms the catalytic core of the enzyme, while SPTSSA or SPTSSB subunits determine substrate specificity. SPT also interacts with ORMDL proteins, especially ORMDL3, which negatively regulate SPT activity in the presence of ceramides. Forms dimers of heterodimers with SPTLC1. Pyridoxal 5'-phosphate serves as cofactor. As to expression, expressed in a variety of tissues. Expressed in brains cortices (at protein level). Expressed in brown and white adipose tissues. Expressed in liver.

It is found in the endoplasmic reticulum membrane. The catalysed reaction is L-serine + hexadecanoyl-CoA + H(+) = 3-oxosphinganine + CO2 + CoA. The enzyme catalyses octadecanoyl-CoA + L-serine + H(+) = 3-oxoeicosasphinganine + CO2 + CoA. It participates in lipid metabolism; sphingolipid metabolism. With respect to regulation, SPT complex catalytic activity is negatively regulated by ORMDL proteins, including ORMDL3, in the presence of ceramides. This mechanism allows to maintain ceramide levels at sufficient concentrations for the production of complex sphingolipids, but which prevents the accumulation of ceramides to levels that trigger apoptosis. Its function is as follows. Component of the serine palmitoyltransferase multisubunit enzyme (SPT) that catalyzes the initial and rate-limiting step in sphingolipid biosynthesis by condensing L-serine and activated acyl-CoA (most commonly palmitoyl-CoA) to form long-chain bases. The SPT complex is composed of SPTLC1, SPTLC2 or SPTLC3 and SPTSSA or SPTSSB. Within this complex, the heterodimer consisting of SPTLC1 and SPTLC2/SPTLC3 forms the catalytic core. The composition of the serine palmitoyltransferase (SPT) complex determines the substrate preference. The SPTLC1-SPTLC2-SPTSSA complex shows a strong preference for C16-CoA substrate, while the SPTLC1-SPTLC3-SPTSSA isozyme uses both C14-CoA and C16-CoA as substrates, with a slight preference for C14-CoA. The SPTLC1-SPTLC2-SPTSSB complex shows a strong preference for C18-CoA substrate, while the SPTLC1-SPTLC3-SPTSSB isozyme displays an ability to use a broader range of acyl-CoAs, without apparent preference. Crucial for adipogenesis. The polypeptide is Serine palmitoyltransferase 2 (Mus musculus (Mouse)).